The primary structure comprises 421 residues: Meiotic fizzy-related protein 1 (421 aa).

Residues aspartate 79–arginine 107 are disordered. Positions tyrosine 86 to methionine 98 are enriched in polar residues. 7 WD repeats span residues lysine 123–leucine 160, glycine 164–serine 203, glycine 206–lysine 246, valine 247–lysine 286, glutamate 289–lysine 331, aspartate 333–asparagine 374, and alanine 377–glutamate 416.

Belongs to the WD repeat CDC20/Fizzy family. As to quaternary structure, interacts with mes1.

It localises to the nucleus. In terms of biological role, meiosis-specific activator of the anaphase promoting complex/cyclosome (APC/C). Involved in cdc13 degradation. In Schizosaccharomyces pombe (strain 972 / ATCC 24843) (Fission yeast), this protein is Meiotic fizzy-related protein 1 (mfr1).